The primary structure comprises 360 residues: Phosphoserine aminotransferase (360 aa).

Residue arginine 42 participates in L-glutamate binding. 4 residues coordinate pyridoxal 5'-phosphate: tryptophan 102, threonine 152, aspartate 171, and glutamine 194. Lysine 195 is subject to N6-(pyridoxal phosphate)lysine. A pyridoxal 5'-phosphate-binding site is contributed by 237 to 238 (NT).

Belongs to the class-V pyridoxal-phosphate-dependent aminotransferase family. SerC subfamily. As to quaternary structure, homodimer. Pyridoxal 5'-phosphate serves as cofactor.

The protein resides in the cytoplasm. It carries out the reaction O-phospho-L-serine + 2-oxoglutarate = 3-phosphooxypyruvate + L-glutamate. The enzyme catalyses 4-(phosphooxy)-L-threonine + 2-oxoglutarate = (R)-3-hydroxy-2-oxo-4-phosphooxybutanoate + L-glutamate. It participates in amino-acid biosynthesis; L-serine biosynthesis; L-serine from 3-phospho-D-glycerate: step 2/3. It functions in the pathway cofactor biosynthesis; pyridoxine 5'-phosphate biosynthesis; pyridoxine 5'-phosphate from D-erythrose 4-phosphate: step 3/5. Its function is as follows. Catalyzes the reversible conversion of 3-phosphohydroxypyruvate to phosphoserine and of 3-hydroxy-2-oxo-4-phosphonooxybutanoate to phosphohydroxythreonine. The protein is Phosphoserine aminotransferase of Coxiella burnetii (strain CbuK_Q154) (Coxiella burnetii (strain Q154)).